The chain runs to 1357 residues: DNA-directed RNA polymerase subunit beta (1357 aa).

Belongs to the RNA polymerase beta chain family. In terms of assembly, the RNAP catalytic core consists of 2 alpha, 1 beta, 1 beta' and 1 omega subunit. When a sigma factor is associated with the core the holoenzyme is formed, which can initiate transcription.

It catalyses the reaction RNA(n) + a ribonucleoside 5'-triphosphate = RNA(n+1) + diphosphate. Functionally, DNA-dependent RNA polymerase catalyzes the transcription of DNA into RNA using the four ribonucleoside triphosphates as substrates. In Acinetobacter baumannii (strain ATCC 17978 / DSM 105126 / CIP 53.77 / LMG 1025 / NCDC KC755 / 5377), this protein is DNA-directed RNA polymerase subunit beta.